The following is a 713-amino-acid chain: MAEELITPVYCTGVSAQVQKQRDKELGLGRHENAIKYLGQDYENLRARCLQNGVLFQDDAFPPVSHSLGFKELGPNSSKTYGIKWKRPTELLSNPQFIVDGATRTDICQGALGDCWLLAAIASLTLNETILHRVVPYGQSFQEGYAGIFHFQLWQFGEWVDVVVDDLLPTKDGKLVFVHSAQGNEFWSALLEKAYAKVNGSYEALSGGCTSEAFEDFTGGVTEWYDLQKAPSDLYQIILKALERGSLLGCSINISDIRDLEAITFKNLVRGHAYSVTDAKQVTYQGQRVNLIRMRNPWGEVEWKGPWSDNSYEWNKVDPYEREQLRVKMEDGEFWMSFRDFIREFTKLEICNLTPDALKSRTLRNWNTTFYEGTWRRGSTAGGCRNYPATFWVNPQFKIRLEEVDDADDYDSRESGCSFLLALMQKHRRRERRFGRDMETIGFAVYQVPRELAGQPVHLKRDFFLANASRAQSEHFINLREVSNRIRLPPGEYIVVPSTFEPNKEGDFLLRFFSEKKAGTQELDDQIQANLPDEKVLSEEEIDDNFKTLFSKLAGDDMEISVKELQTILNRIISKHKDLRTNGFSLESCRSMVNLMDRDGNGKLGLVEFNILWNRIRNYLTIFRKFDLDKSGSMSAYEMRMAIEAAGFKLNKKLHELIITRYSEPDLAVDFDNFVCCLVRLETMFRFFKILDTDLDGVVTFDLFKWLQLTMFA.

In terms of domain architecture, Calpain catalytic spans 55 to 354 (LFQDDAFPPV…FTKLEICNLT (300 aa)). Active-site residues include cysteine 115, histidine 272, and asparagine 296. Threonine 354 bears the Phosphothreonine mark. Residues 355-525 (PDALKSRTLR…KKAGTQELDD (171 aa)) are domain III. Positions 526–541 (QIQANLPDEKVLSEEE) are linker. The domain IV stretch occupies residues 542–712 (IDDNFKTLFS…LFKWLQLTMF (171 aa)). EF-hand domains lie at 557–575 (DMEI…IISK), 584–609 (FSLE…LVEF), 614–649 (NRIR…AGFK), and 679–713 (VRLE…TMFA). Residues aspartate 597, aspartate 599, asparagine 601, lysine 603, glutamate 608, aspartate 627, aspartate 629, serine 631, serine 633, and glutamate 638 each contribute to the Ca(2+) site.

This sequence belongs to the peptidase C2 family. As to quaternary structure, forms a heterodimer with a small (regulatory) subunit CAPNS1. The cofactor is Ca(2+). Undergoes calcium-induced successive autoproteolytic cleavages that generate a membrane-bound 78 kDa active form and an intracellular 75 kDa active form. Calpastatin reduces with high efficiency the transition from 78 kDa to 75 kDa calpain forms.

The protein localises to the cytoplasm. It is found in the cell membrane. It carries out the reaction Broad endopeptidase specificity.. With respect to regulation, activated by micromolar concentrations of calcium and inhibited by calpastatin. Its function is as follows. Calcium-regulated non-lysosomal thiol-protease which catalyzes limited proteolysis of substrates involved in cytoskeletal remodeling and signal transduction. Proteolytically cleaves CTBP1 at 'Asn-364', 'Gly-377' and 'His-399'. Cleaves and activates caspase-7 (CASP7). This chain is Calpain-1 catalytic subunit, found in Rattus norvegicus (Rat).